Consider the following 1949-residue polypeptide: Protein GREB1 (1949 aa).

Disordered stretches follow at residues 52-77 (EGGS…GPPN), 302-334 (ILSN…GGGN), and 1085-1210 (EALE…GQRS). The segment covering 59-68 (NEEEEEEGEG) has biased composition (acidic residues). Basic and acidic residues-rich tracts occupy residues 1085 to 1095 (EALESDAEKLS) and 1110 to 1126 (TSEK…RSHD). Low complexity predominate over residues 1127-1147 (SASSSLSSKASGSALGGESSA). Residues 1166 to 1178 (PAEEGRAPGEKQR) are compositionally biased toward basic and acidic residues. The helical transmembrane segment at 1868 to 1888 (DLLFSGLLLYLCDSFVGASFL) threads the bilayer.

Belongs to the GREB1 family. In terms of tissue distribution, expressed in proliferating prostatic tissue and prostate cancer.

It is found in the membrane. May play a role in estrogen-stimulated cell proliferation. Acts as a regulator of hormone-dependent cancer growth in breast and prostate cancers. The protein is Protein GREB1 (GREB1) of Homo sapiens (Human).